Here is a 548-residue protein sequence, read N- to C-terminus: MVLAELYVSDREGSDATGDGTKEKPFKTGLKALMTVGKEPFPTIYVDSQKENERWNVISKSQLKNIKKMWHREQMKSESREKKEAEDSLRREKNLEEAKKITIKNDPSLPEPKCVKIGALEGYRGQRVKVFGWVHRLRRQGKNLMFLVLRDGTGYLQCVLADELCQCYNGVLLSTESSVAVYGMLNLTPKGKQAPGGHELSCDFWELIGLAPAGGADNLINEESDVDVQLNNRHMMIRGENMSKILKARSMVTRCFRDHFFDRGYYEVTPPTLVQTQVEGGATLFKLDYFGEEAFLTQSSQLYLETCLPALGDVFCIAQSYRAEQSRTRRHLAEYTHVEAECPFLTFDDLLNRLEDLVCDVVDRILKSPAGSIVHELNPNFQPPKRPFKRMNYSDAIVWLKEHDVKKEDGTFYEFGEDIPEAPERLMTDTINEPILLCRFPVEIKSFYMQRCPEDSRLTESVDVLMPNVGEIVGGSMRIFDSEEILAGYKREGIDPTPYYWYTDQRKYGTCPHGGYGLGLERFLTWILNRYHIRDVCLYPRFVQRCTP.

The tract at residues 1 to 25 (MVLAELYVSDREGSDATGDGTKEKP) is disordered. Residues 8 to 25 (VSDREGSDATGDGTKEKP) are compositionally biased toward basic and acidic residues. Serine 61 is subject to Phosphoserine. Residues 69–91 (MWHREQMKSESREKKEAEDSLRR) form a disordered region. Over residues 71–91 (HREQMKSESREKKEAEDSLRR) the composition is skewed to basic and acidic residues. N6-acetyllysine is present on lysine 244. Position 482 is a phosphoserine (serine 482). Lysine 490 carries the N6-acetyllysine modification.

This sequence belongs to the class-II aminoacyl-tRNA synthetase family. In terms of assembly, homodimer.

It is found in the cytoplasm. The enzyme catalyses tRNA(Asn) + L-asparagine + ATP = L-asparaginyl-tRNA(Asn) + AMP + diphosphate + H(+). In terms of biological role, catalyzes the attachment of asparagine to tRNA(Asn) in a two-step reaction: asparagine is first activated by ATP to form Asn-AMP and then transferred to the acceptor end of tRNA(Asn). In addition to its essential role in protein synthesis, acts as a signaling molecule that induced migration of CCR3-expressing cells. Has an essential role in the development of the cerebral cortex, being required for proper proliferation of radial glial cells. The polypeptide is Asparagine--tRNA ligase, cytoplasmic (Homo sapiens (Human)).